Reading from the N-terminus, the 277-residue chain is MSKANLVIYVISDSIGETAEQVAKAAVSQFKTEDYEIRRFPYINEKRQILEILEEAKNENAVIAFTIVISELREFLIEEAVHLNIPYADVITPILSAMESVLEIPAKKEPGLIRKLDERYFRKVEAIEFAVKYDDGKDTRGLKQADIVLTGISRTSKTPLSMYLAHKNLKVANVPLVPEVAPPRELFEINPKKIIGLTTNPVKLIEIRQERLKALGLKNEANYASMERIFEELEYADGIMKRLGCPVIDVSTKAIEESAGIILEIFKEMGHKFSNGK.

Position 151–158 (151–158) interacts with ADP; the sequence is GISRTSKT.

The protein belongs to the pyruvate, phosphate/water dikinase regulatory protein family. PDRP subfamily.

The catalysed reaction is N(tele)-phospho-L-histidyl/L-threonyl-[pyruvate, phosphate dikinase] + ADP = N(tele)-phospho-L-histidyl/O-phospho-L-threonyl-[pyruvate, phosphate dikinase] + AMP + H(+). It carries out the reaction N(tele)-phospho-L-histidyl/O-phospho-L-threonyl-[pyruvate, phosphate dikinase] + phosphate + H(+) = N(tele)-phospho-L-histidyl/L-threonyl-[pyruvate, phosphate dikinase] + diphosphate. In terms of biological role, bifunctional serine/threonine kinase and phosphorylase involved in the regulation of the pyruvate, phosphate dikinase (PPDK) by catalyzing its phosphorylation/dephosphorylation. The polypeptide is Putative pyruvate, phosphate dikinase regulatory protein (Alkaliphilus oremlandii (strain OhILAs) (Clostridium oremlandii (strain OhILAs))).